The sequence spans 417 residues: Acetyltransferase cdmC (417 aa).

A glycan (N-linked (GlcNAc...) asparagine) is linked at Asn-64. 3 consecutive transmembrane segments (helical) span residues Ile-308 to Val-328, Gly-357 to Leu-377, and Leu-389 to Leu-409.

Belongs to the wax synthase family.

The protein resides in the membrane. It catalyses the reaction chrodrimanin A + acetyl-CoA = chrodrimanin B + CoA. It functions in the pathway secondary metabolite biosynthesis; terpenoid biosynthesis. Its function is as follows. Acetyltransferase; part of the gene cluster that mediates the biosynthesis of chrodrimanin B, a meroterpenoid that acts as a potent blocker of insect GABA-gated chloride channels. The first step of the pathway is the biosynthesis of 6-hydroxymellein by the polyketide synthase cdmE. The prenyltransferase cdmH acts as a 6-hydroxymellein 5-farnesyltransferase and produces the hydrophobic metabolite verruculide C. The FAD-dependent monooxygenase cdmI further converts verruculide C into verruculide B. The terpene cyclase cdmG then produced the pentacyclic molecule 3-hydroxypentacecilide A, the backbone structure of chrodrimanin B, via folding the farnesyl moiety of the substrate into the chair-boat conformation. The short-chain dehydrogenase/reductase cdmF functions as the 3-OH dehydrogenase that oxidizes the C-3 hydroxyl group of 3-hydroxypentacecilide A and produces chrodrimanin C, the dehydrogenated product of 3-hydroxypentacecilide A. The cytochrome P450 monooxygenase cdmJ then accepts both 3-hydroxypentacecilide A and chrodrimanin C and functions as a C-7-beta-hydroxylase to produce respectively chrodrimanin H and chrodrimanin F. The dioxygenase cdmA accepts chrodrimanin H to afford chrodrimanin E, which is further transformed to chrodrimanin A by the dioxygenase cdmD. CdmA can also accept chrodrimanin C as substrate to convert it into verruculide A, which is further converted into chrodrimanin T by cdmD. The last step of the biosynthesis is proposed to be performed by the acetyltransferase cdmC which acetylates chrodrimanin A to yield chrodrimanin B. The pathway may also lead to the production of additional shunt products, including chrodrimanins T and U. This is Acetyltransferase cdmC from Talaromyces verruculosus (Penicillium verruculosum).